We begin with the raw amino-acid sequence, 589 residues long: V-type ATP synthase alpha chain (589 aa).

239–246 lines the ATP pocket; the sequence is GPFGAGKT.

The protein belongs to the ATPase alpha/beta chains family.

The catalysed reaction is ATP + H2O + 4 H(+)(in) = ADP + phosphate + 5 H(+)(out). Produces ATP from ADP in the presence of a proton gradient across the membrane. The V-type alpha chain is a catalytic subunit. The sequence is that of V-type ATP synthase alpha chain from Treponema denticola (strain ATCC 35405 / DSM 14222 / CIP 103919 / JCM 8153 / KCTC 15104).